The sequence spans 269 residues: MTPLKIAIAGANGRMGRVLVEAVNNHPDTVLSGALEHSGSEALGLDAGYAVGLKTGIAISDDVDTVLAQSDVLIDFTRPEPTLKHLQKCVEKQVNIIIGTTGFDDAGKAAIRAAAEKTGIVFAANFSVGVNLTFHILDTVALVLNEGYDIEIIEGHHRHKVDAPSGTALRMGEVIAGALGRDLKQCAVYGREGHTGPRDPSTIGFATVRAGDIVGDHTALFATDGERVEITHKASSRMTFAAGAVRAAVWVNGKTGLYDMQDVLGLNNR.

NAD(+) contacts are provided by residues 10 to 15, E36, 99 to 101, and 123 to 126; these read GANGRM, GTT, and AANF. The active-site Proton donor/acceptor is the H156. Position 157 (H157) interacts with (S)-2,3,4,5-tetrahydrodipicolinate. The Proton donor role is filled by K160. 166-167 contacts (S)-2,3,4,5-tetrahydrodipicolinate; it reads GT.

It belongs to the DapB family.

Its subcellular location is the cytoplasm. It catalyses the reaction (S)-2,3,4,5-tetrahydrodipicolinate + NAD(+) + H2O = (2S,4S)-4-hydroxy-2,3,4,5-tetrahydrodipicolinate + NADH + H(+). It carries out the reaction (S)-2,3,4,5-tetrahydrodipicolinate + NADP(+) + H2O = (2S,4S)-4-hydroxy-2,3,4,5-tetrahydrodipicolinate + NADPH + H(+). The protein operates within amino-acid biosynthesis; L-lysine biosynthesis via DAP pathway; (S)-tetrahydrodipicolinate from L-aspartate: step 4/4. Catalyzes the conversion of 4-hydroxy-tetrahydrodipicolinate (HTPA) to tetrahydrodipicolinate. The chain is 4-hydroxy-tetrahydrodipicolinate reductase from Neisseria meningitidis serogroup A / serotype 4A (strain DSM 15465 / Z2491).